The primary structure comprises 414 residues: 3-phosphoshikimate 1-carboxyvinyltransferase (414 aa).

The 3-phosphoshikimate site is built by Lys-20, Ser-21, and Arg-25. Lys-20 provides a ligand contact to phosphoenolpyruvate. Arg-113 contributes to the phosphoenolpyruvate binding site. Positions 154, 155, 156, 181, 296, and 323 each coordinate 3-phosphoshikimate. Gln-156 is a phosphoenolpyruvate binding site. Catalysis depends on Asp-296, which acts as the Proton acceptor. Residues Arg-327, Arg-371, and Lys-395 each contribute to the phosphoenolpyruvate site.

Belongs to the EPSP synthase family. As to quaternary structure, monomer.

The protein resides in the cytoplasm. The enzyme catalyses 3-phosphoshikimate + phosphoenolpyruvate = 5-O-(1-carboxyvinyl)-3-phosphoshikimate + phosphate. It functions in the pathway metabolic intermediate biosynthesis; chorismate biosynthesis. Catalyzes the transfer of the enolpyruvyl moiety of phosphoenolpyruvate (PEP) to the 5-hydroxyl of shikimate-3-phosphate (S3P) to produce enolpyruvyl shikimate-3-phosphate and inorganic phosphate. This Saccharolobus solfataricus (strain ATCC 35092 / DSM 1617 / JCM 11322 / P2) (Sulfolobus solfataricus) protein is 3-phosphoshikimate 1-carboxyvinyltransferase.